A 185-amino-acid polypeptide reads, in one-letter code: Ribosome-recycling factor (185 aa).

This sequence belongs to the RRF family.

The protein resides in the cytoplasm. In terms of biological role, responsible for the release of ribosomes from messenger RNA at the termination of protein biosynthesis. May increase the efficiency of translation by recycling ribosomes from one round of translation to another. The polypeptide is Ribosome-recycling factor (Pseudomonas fluorescens (strain ATCC BAA-477 / NRRL B-23932 / Pf-5)).